Consider the following 156-residue polypeptide: Small ribosomal subunit protein uS7 (156 aa).

Belongs to the universal ribosomal protein uS7 family. Part of the 30S ribosomal subunit. Contacts proteins S9 and S11.

Its function is as follows. One of the primary rRNA binding proteins, it binds directly to 16S rRNA where it nucleates assembly of the head domain of the 30S subunit. Is located at the subunit interface close to the decoding center, probably blocks exit of the E-site tRNA. This Burkholderia multivorans (strain ATCC 17616 / 249) protein is Small ribosomal subunit protein uS7.